A 135-amino-acid chain; its full sequence is UPF0102 protein Mkms_2031 (135 aa).

Belongs to the UPF0102 family.

In Mycobacterium sp. (strain KMS), this protein is UPF0102 protein Mkms_2031.